The chain runs to 801 residues: Transferrin receptor protein 2 (801 aa).

Topologically, residues 1-83 (MERLWGLFQR…WAAAGRRAAP (83 aa)) are cytoplasmic. The disordered stretch occupies residues 16–45 (PRSSQTVYQRVEGPRKGHLEEEEEDGEEGA). Positions 23–26 (YQRV) match the Endocytosis signal motif. Residues 35–45 (EEEEEDGEEGA) are compositionally biased toward acidic residues. A helical; Signal-anchor for type II membrane protein membrane pass occupies residues 84-104 (YLVLTALLIFTGAFLLGYVAF). At 105–801 (RGSCQACGDS…GDVWNIDNNF (697 aa)) the chain is on the extracellular side. N-linked (GlcNAc...) asparagine glycans are attached at residues Asn240, Asn339, Asn540, and Asn754.

The protein belongs to the peptidase M28 family. M28B subfamily. As to quaternary structure, homodimer. In terms of tissue distribution, predominantly expressed in liver. While the alpha form is also expressed in spleen, lung, muscle, prostate and peripheral blood mononuclear cells, the beta form is expressed in all tissues tested, albeit weakly.

It localises to the cell membrane. The protein resides in the cytoplasm. Mediates cellular uptake of transferrin-bound iron in a non-iron dependent manner. May be involved in iron metabolism, hepatocyte function and erythrocyte differentiation. In Homo sapiens (Human), this protein is Transferrin receptor protein 2 (TFR2).